The chain runs to 293 residues: uncharacterized protein (293 aa).

This sequence belongs to the TolB family.

This is an uncharacterized protein from Agrobacterium fabrum (strain C58 / ATCC 33970) (Agrobacterium tumefaciens (strain C58)).